We begin with the raw amino-acid sequence, 397 residues long: Xylose isomerase (397 aa).

Active-site residues include His-54 and Asp-57. Residues Glu-181, Glu-217, His-220, Asp-245, Asp-255, Asp-257, and Asp-293 each coordinate Mg(2+).

The protein belongs to the xylose isomerase family. In terms of assembly, homotetramer. Mg(2+) serves as cofactor.

It localises to the cytoplasm. The catalysed reaction is alpha-D-xylose = alpha-D-xylulofuranose. The sequence is that of Xylose isomerase from Clavibacter michiganensis subsp. michiganensis (strain NCPPB 382).